The primary structure comprises 228 residues: Glucose-induced degradation protein 8-A homolog (228 aa).

Positions 25–57 (QRADMNRLIMNYLVTEGFKEAAEKFRMESGIEP) constitute a LisH domain. The 58-residue stretch at 63-120 (SLDERIKIREMVLKGQIQEAIALINSLHPELLDTNRYLYFHLQQQHLIELIRLRETEA) folds into the CTLH domain.

It belongs to the GID8 family. Identified in the CTLH complex that contains at least MAEA, RMND5A (or alternatively its paralog RMND5B), GID8, WDR26, and RANBP9 and/or RANBP10. Interacts with CTNNB1.

Functionally, core component of the CTLH E3 ubiquitin-protein ligase complex that selectively accepts ubiquitin from UBE2H and mediates ubiquitination and subsequent proteasomal degradation of target proteins. Acts as a positive regulator of Wnt signaling pathway by promoting beta-catenin (CTNNB1) nuclear accumulation. Required for normal Wnt signaling and normal dorsoventral patterning during embryogenesis. The sequence is that of Glucose-induced degradation protein 8-A homolog (gid8a) from Danio rerio (Zebrafish).